Consider the following 559-residue polypeptide: MSQAHRHLALLLPAEAVLCAAAMRFQDVLSNGRTAPVTNHKKIQGWSSDQNKWNEKLYPFWEDNDPRWKDCWKGGKVTTKLVTDSPALVGSNVTFVVTLQFPKCQKEDDDGNIIYQRNCTPDSPAAQDQYVYNWTEWIDNCGWENCTSNHSHNVFPDGKPFPHYPGWRRRNFVYLFHTVGQYYQTIGRSSANFSVNTANITLGKHIMAVSIYRRGHSTYVPIARASTTYVVTDKIPILVSMSQKHDRNISDSIFIKDSPITFDVKIHDPSYYLNDSAISYKWNFGDGSGLFVESGATTSHTFSLQGNFTLNLTVQAIIPVPCKPVTPTPSLPTPAVTTDASSNSDPSAPNEMAEDNPDGGCHIYRYGYYTAGITIVEGILEVNIIQMTSIQMTESQAENPLVDFVVTCQGSFPTDVCTAVSDPTCQVSQGMVCDPVVVTDECVLTIRRAFDEPGTYCINITLGDDTSQALASALISVNGGSSSGTTKGVFIFLGLLAVFGAIGAFVLYKRYKQYKPIERSAGQAENQEGLSAYVSNFKAFFFPKSTERNPLLKSKPGIV.

An N-terminal signal peptide occupies residues 1–22 (MSQAHRHLALLLPAEAVLCAAA). Residues 23–487 (MRFQDVLSNG…NGGSSSGTTK (465 aa)) lie on the Extracellular side of the membrane. Residues Asn-92, Asn-133, Asn-145, Asn-149, Asn-192, Asn-199, Asn-248, Asn-274, Asn-307, and Asn-311 are each glycosylated (N-linked (GlcNAc...) asparagine). One can recognise a PKD domain in the interval 239–326 (VSMSQKHDRN…IIPVPCKPVT (88 aa)). Residues 329 to 356 (PSLPTPAVTTDASSNSDPSAPNEMAEDN) are disordered. The span at 335-347 (AVTTDASSNSDPS) shows a compositional bias: polar residues. Asn-459 carries N-linked (GlcNAc...) asparagine glycosylation. A helical transmembrane segment spans residues 488 to 508 (GVFIFLGLLAVFGAIGAFVLY). Residues 509–559 (KRYKQYKPIERSAGQAENQEGLSAYVSNFKAFFFPKSTERNPLLKSKPGIV) lie on the Cytoplasmic side of the membrane.

It belongs to the PMEL/NMB family. In terms of tissue distribution, melanocyte-specific, restricted to the pigmented layer of the retina and the epidermis.

Its subcellular location is the membrane. Functionally, could be involved in melanogenesis. The polypeptide is Protein QNR-71 (QNR-71) (Coturnix japonica (Japanese quail)).